The following is an 800-amino-acid chain: N,N'-diacetylchitobiose phosphorylase (800 aa).

N-acetyl-alpha-D-glucosamine 1-phosphate contacts are provided by arginine 333, arginine 343, arginine 349, aspartate 350, tryptophan 490, and aspartate 492. The Proton donor role is filled by aspartate 492. Aspartate 492, lysine 636, and glutamate 637 together coordinate N-acetyl-D-glucosamine. Glutamate 637, histidine 644, glutamine 690, threonine 709, and glycine 710 together coordinate N-acetyl-alpha-D-glucosamine 1-phosphate.

The protein belongs to the glycosyl hydrolase 94 family. Homodimer.

It catalyses the reaction N,N'-diacetylchitobiose + phosphate = N-acetyl-alpha-D-glucosamine 1-phosphate + N-acetyl-D-glucosamine. Its function is as follows. Catalyzes the reversible phosphorolysis of chitobiose (N,N'-diacetylchitobiose or (GlcNAc)(2)) into N-acetyl-alpha-D-glucosamine 1-phosphate (GlcNAc-1-P) and N-acetyl-D-glucosamine (GlcNAc) with inversion of the anomeric configuration. In Vibrio furnissii, this protein is N,N'-diacetylchitobiose phosphorylase.